We begin with the raw amino-acid sequence, 683 residues long: DNA ligase (683 aa).

NAD(+)-binding positions include 29-33 (DAEFD), 79-80 (SL), and Glu-109. Lys-111 functions as the N6-AMP-lysine intermediate in the catalytic mechanism. Residues Arg-132, Glu-172, Lys-288, and Lys-312 each coordinate NAD(+). Residues Cys-406, Cys-409, Cys-425, and Cys-431 each coordinate Zn(2+). The 89-residue stretch at 595–683 (SVPRTLAGVT…GPPAEAGEPT (89 aa)) folds into the BRCT domain.

This sequence belongs to the NAD-dependent DNA ligase family. LigA subfamily. It depends on Mg(2+) as a cofactor. Mn(2+) is required as a cofactor.

The enzyme catalyses NAD(+) + (deoxyribonucleotide)n-3'-hydroxyl + 5'-phospho-(deoxyribonucleotide)m = (deoxyribonucleotide)n+m + AMP + beta-nicotinamide D-nucleotide.. DNA ligase that catalyzes the formation of phosphodiester linkages between 5'-phosphoryl and 3'-hydroxyl groups in double-stranded DNA using NAD as a coenzyme and as the energy source for the reaction. It is essential for DNA replication and repair of damaged DNA. The polypeptide is DNA ligase (Mycobacterium ulcerans (strain Agy99)).